The primary structure comprises 161 residues: Regulator of ribonuclease activity A (161 aa).

Belongs to the RraA family. As to quaternary structure, homotrimer. Binds to both RNA-binding sites in the C-terminal region of Rne and to RhlB.

The protein resides in the cytoplasm. Globally modulates RNA abundance by binding to RNase E (Rne) and regulating its endonucleolytic activity. Can modulate Rne action in a substrate-dependent manner by altering the composition of the degradosome. Modulates RNA-binding and helicase activities of the degradosome. The protein is Regulator of ribonuclease activity A of Salmonella choleraesuis (strain SC-B67).